A 1372-amino-acid chain; its full sequence is Insulin receptor (1372 aa).

A signal peptide spans 1 to 27 (MGFGRGCETTAVPLLVAVAALLVGTAG). Extracellular-facing segments span residues 28-748 (HLYP…PRPS) and 753-946 (SLEE…NIAK). Cys35 and Cys53 are disulfide-bonded. Asn43, Asn52, Asn105, and Asn138 each carry an N-linked (GlcNAc...) asparagine glycan. Intrachain disulfides connect Cys153-Cys182, Cys186-Cys209, Cys196-Cys215, Cys219-Cys228, Cys223-Cys234, Cys235-Cys243, Cys239-Cys252, Cys255-Cys264, and Cys268-Cys280. A glycan (N-linked (GlcNAc...) asparagine) is linked at Asn242. A glycan (N-linked (GlcNAc...) asparagine) is linked at Asn282. 5 cysteine pairs are disulfide-bonded: Cys286-Cys311, Cys293-Cys301, Cys315-Cys328, Cys331-Cys335, and Cys339-Cys360. Residue Asn322 is glycosylated (N-linked (GlcNAc...) asparagine). N-linked (GlcNAc...) asparagine glycosylation is present at Asn364. Phosphoserine is present on Ser400. Tyr401 carries the phosphotyrosine modification. Ser407 carries the post-translational modification Phosphoserine. Asn424 and Asn445 each carry an N-linked (GlcNAc...) asparagine glycan. Cys462 and Cys495 are joined by a disulfide. Asn541, Asn635, Asn653, and Asn700 each carry an N-linked (GlcNAc...) asparagine glycan. The region spanning 626–728 (VPLDPISVSN…SQILKELEES (103 aa)) is the Fibronectin type-III 1 domain. Disulfide bonds link Cys676–Cys889 and Cys815–Cys824. The segment at 688–709 (SPPFESDDSQKHNQSEYDDSAS) is disordered. The interval 735–743 (EDYLHNVVF) is insulin-binding. Fibronectin type-III domains lie at 744 to 838 (VPRP…MPEA) and 843 to 937 (IVGP…VTDY). Residues Asn759 and Asn772 are each glycosylated (N-linked (GlcNAc...) asparagine). N-linked (GlcNAc...) asparagine glycans are attached at residues Asn910 and Asn923. Residues 947-967 (IIIGPLIFVFLFSVVIGSIYL) form a helical membrane-spanning segment. At 968–1372 (FLRKRQPDGP…VLTLPRSNPS (405 aa)) the chain is on the cytoplasmic side. The tract at residues 986–989 (NPEY) is important for interaction with IRS1, SHC1 and STAT5B. At Tyr989 the chain carries Phosphotyrosine; by autocatalysis. A Protein kinase domain is found at 1013-1288 (ITLLRELGQG…LLKDDLHPSF (276 aa)). The ATP site is built by Ser1023 and Lys1047. A Glycyl lysine isopeptide (Lys-Gly) (interchain with G-Cter in ubiquitin) cross-link involves residue Lys1069. The residue at position 1073 (Cys1073) is an S-nitrosocysteine. ATP is bound at residue 1094–1100 (ELMAHGD). Residue Asp1149 is the Proton donor/acceptor of the active site. Residues 1153 to 1154 (RN) and Asp1167 each bind ATP. 5 positions are modified to phosphotyrosine; by autocatalysis: Tyr1175, Tyr1179, Tyr1180, Tyr1345, and Tyr1351. Residues 1349–1372 (IPYTHMNGGKKNGRVLTLPRSNPS) form a disordered region. The tract at residues 1351–1354 (YTHM) is PIK3R1 binding.

The protein belongs to the protein kinase superfamily. Tyr protein kinase family. Insulin receptor subfamily. In terms of assembly, tetramer of 2 alpha and 2 beta chains linked by disulfide bonds. The alpha chains carry the insulin-binding regions, while the beta chains carry the kinase domain. Forms a hybrid receptor with IGF1R, the hybrid is a tetramer consisting of 1 alpha chain and 1 beta chain of INSR and 1 alpha chain and 1 beta chain of IGF1R. Interacts with SORBS1 but dissociates from it following insulin stimulation. Binds SH2B2. Activated form of INSR interacts (via Tyr-989) with the PTB/PID domains of IRS1 and SHC1. The sequences surrounding the phosphorylated NPXY motif contribute differentially to either IRS1 or SHC1 recognition. Interacts (via tyrosines in the C-terminus) with IRS2 (via PTB domain and 591-786 AA); the 591-786 would be the primary anchor of IRS2 to INSR while the PTB domain would have a stabilizing action on the interaction with INSR. Interacts with the SH2 domains of the 85 kDa regulatory subunit of PI3K (PIK3R1) in vitro, when autophosphorylated on tyrosine residues. Interacts with SOCS7. Interacts (via the phosphorylated Tyr-989), with SOCS3. Interacts (via the phosphorylated Tyr-1175, Tyr-1179, Tyr-1180) with SOCS1. Interacts with CAV2 (tyrosine-phosphorylated form); the interaction is increased with 'Tyr-27'phosphorylation of CAV2. Interacts with ARRB2. Interacts with GRB10; this interaction blocks the association between IRS1/IRS2 and INSR, significantly reduces insulin-stimulated tyrosine phosphorylation of IRS1 and IRS2 and thus decreases insulin signaling. Interacts with GRB7. Interacts with PDPK1. Interacts (via Tyr-1180) with GRB14 (via BPS domain); this interaction protects the tyrosines in the activation loop from dephosphorylation, but promotes dephosphorylation of Tyr-989, this results in decreased interaction with, and phosphorylation of, IRS1. Interacts (via subunit alpha) with ENPP1 (via 485-599 AA); this interaction blocks autophosphorylation. Interacts with PTPRE; this interaction is dependent of Tyr-1175, Tyr-1179 and Tyr-1180 of the INSR. Interacts with STAT5B (via SH2 domain). Interacts with PTPRF. Interacts with the insulin receptor SORL1; this interaction strongly increases its surface exposure, hence strengthens insulin signal reception. Interacts (tyrosine phosphorylated) with CCDC88A/GIV (via SH2-like region); binding requires autophosphorylation of the INSR C-terminal region. Interacts with GNAI3; the interaction is probably mediated by CCDC88A/GIV. Interacts with LMBRD1. Interacts (in response to insulin stimulation) with NCK1; this interaction may recruit PTPN1 to mediate INSR dephosphorylation. Interacts with CD248; this interaction diminishes INSR autophosphorylation. Post-translationally, after being transported from the endoplasmic reticulum to the Golgi apparatus, the single glycosylated precursor is further glycosylated and then cleaved, followed by its transport to the plasma membrane. Autophosphorylated on tyrosine residues in response to insulin. Phosphorylation of Tyr-989 is required for IRS1-, SHC1-, and STAT5B-binding. Dephosphorylated by PTPRE on Tyr-989, Tyr-1175, Tyr-1179 and Tyr-1180 residues. May also be phosphorylated at Tyr-1175 and Tyr-1180 by mTORC2. Dephosphorylated by PTPRF and PTPN1. Dephosphorylated by PTPN2 and Ptprv; down-regulates insulin-induced signaling. In terms of processing, S-nitrosylation at Cys-1073 by BLVRB inhibits the receptor tyrosine kinase, thereby inhibiting insulin signaling. Post-translationally, ubiquitinated by MARCHF1; leading to degradation thereby reducing surface INSR expression.

The protein resides in the cell membrane. It is found in the recycling endosome membrane. The protein localises to the late endosome. Its subcellular location is the lysosome. The catalysed reaction is L-tyrosyl-[protein] + ATP = O-phospho-L-tyrosyl-[protein] + ADP + H(+). Its activity is regulated as follows. Activated in response to insulin. Autophosphorylation activates the kinase activity. PTPN1, PTPRE and PTPRF dephosphorylate important tyrosine residues, thereby reducing INSR activity. Inhibited by ENPP1. GRB10 and GRB14 inhibit the catalytic activity of the INSR, they block access of substrates to the activated receptor. SOCS1 and SOCS3 act as negative regulators of INSR activity, they bind to the activated INRS and interfere with the phosphorylation of INSR substrates. Interacts with PTPRF. Interacts with ATIC; ATIC together with PRKAA2/AMPK2 and HACD3/PTPLAD1 is proposed to be part of a signaling netwok regulating INSR autophosphorylation and endocytosis. In terms of biological role, receptor tyrosine kinase which mediates the pleiotropic actions of insulin. Binding of insulin leads to phosphorylation of several intracellular substrates, including, insulin receptor substrates (IRS1, 2, 3, 4), SHC, GAB1, CBL and other signaling intermediates. Each of these phosphorylated proteins serve as docking proteins for other signaling proteins that contain Src-homology-2 domains (SH2 domain) that specifically recognize different phosphotyrosine residues, including the p85 regulatory subunit of PI3K and SHP2. Phosphorylation of IRSs proteins lead to the activation of two main signaling pathways: the PI3K-AKT/PKB pathway, which is responsible for most of the metabolic actions of insulin, and the Ras-MAPK pathway, which regulates expression of some genes and cooperates with the PI3K pathway to control cell growth and differentiation. Binding of the SH2 domains of PI3K to phosphotyrosines on IRS1 leads to the activation of PI3K and the generation of phosphatidylinositol-(3, 4, 5)-triphosphate (PIP3), a lipid second messenger, which activates several PIP3-dependent serine/threonine kinases, such as PDPK1 and subsequently AKT/PKB. The net effect of this pathway is to produce a translocation of the glucose transporter SLC2A4/GLUT4 from cytoplasmic vesicles to the cell membrane to facilitate glucose transport. Moreover, upon insulin stimulation, activated AKT/PKB is responsible for: anti-apoptotic effect of insulin by inducing phosphorylation of BAD; regulates the expression of gluconeogenic and lipogenic enzymes by controlling the activity of the winged helix or forkhead (FOX) class of transcription factors. Another pathway regulated by PI3K-AKT/PKB activation is mTORC1 signaling pathway which regulates cell growth and metabolism and integrates signals from insulin. AKT mediates insulin-stimulated protein synthesis by phosphorylating TSC2 thereby activating mTORC1 pathway. The Ras/RAF/MAP2K/MAPK pathway is mainly involved in mediating cell growth, survival and cellular differentiation of insulin. Phosphorylated IRS1 recruits GRB2/SOS complex, which triggers the activation of the Ras/RAF/MAP2K/MAPK pathway. In addition to binding insulin, the insulin receptor can bind insulin-like growth factors (IGFI and IGFII). When present in a hybrid receptor with IGF1R, binds IGF1. In adipocytes, inhibits lipolysis. The chain is Insulin receptor (Insr) from Mus musculus (Mouse).